The following is an 855-amino-acid chain: DNA mismatch repair protein MutS (855 aa).

ATP is bound at residue 621 to 628 (GPNMGGKS).

The protein belongs to the DNA mismatch repair MutS family.

Functionally, this protein is involved in the repair of mismatches in DNA. It is possible that it carries out the mismatch recognition step. This protein has a weak ATPase activity. The chain is DNA mismatch repair protein MutS from Francisella tularensis subsp. holarctica (strain OSU18).